The chain runs to 547 residues: MKRARFEDDFNPVYPYEHYNPLDIPFITPPFASSNGLQEKPPGVLSLKYTDPLTTKNGALTLKLGTGLNIDKNGDLSSDASVEVSAPITKTNKIVGLNYTKPLALQNNALTLSYNAPFNVVNNNLALNMSQPVTINANNELSLLIDAPLNADTGTLRLRSDAPLGLVDKTLKVLFSSPLYLDNNFLTLAIERPLALSSNRAVALKYSPPLKIENENLTLSTGGPFTVSGGNLNLATSAPLSVQNNSLSLGVNPPFLITDSGLAMDLGDGLALGGSKLIINLGPGLQMSNGAITLALDAALPLQYKNNQLQLRIGSASALIMSGVTQTLNVNANTSKGLAIENNSLVVKLGNGLRFDSWGSIAVSPTTTTPTTLWTTADPSPNATFYESLDAKVWLVLVKCNGMVNGTISIKAQKGTLLKPTASFISFVMYFYSDGTWRKNYPVFDNEGILANSATWGYRQGQSANTNVSNAVEFMPSSKRYPNEKGSEVQNMALTYTFLQGDPNMAISFQSIYNHAIEGYSLKFTWRVRNNERFDIPCCSFSYVTEQ.

The protein belongs to the adenoviridae fiber family. Homotrimer. Interacts with host receptor CXCAR. Interacts (via N-terminal tail region) with pentons.

The protein resides in the virion. It localises to the host nucleus. In terms of biological role, forms spikes that protrude from each vertex of the icosahedral capsid. Interacts with host receptor CXCAR to provide virion initial attachment to target cell. Fiber proteins are shed during virus entry, when virus is still at the cell surface. The sequence is that of Fiber protein 1 from Human adenovirus F serotype 40 (HAdV-40).